Consider the following 444-residue polypeptide: Glutamyl-tRNA reductase (444 aa).

Substrate contacts are provided by residues 49-52 (TCNR), Ser-109, 114-116 (ETQ), and Gln-120. Residue Cys-50 is the Nucleophile of the active site. Position 189 to 194 (189 to 194 (GAGKMG)) interacts with NADP(+).

The protein belongs to the glutamyl-tRNA reductase family. As to quaternary structure, homodimer.

It carries out the reaction (S)-4-amino-5-oxopentanoate + tRNA(Glu) + NADP(+) = L-glutamyl-tRNA(Glu) + NADPH + H(+). It participates in porphyrin-containing compound metabolism; protoporphyrin-IX biosynthesis; 5-aminolevulinate from L-glutamyl-tRNA(Glu): step 1/2. Catalyzes the NADPH-dependent reduction of glutamyl-tRNA(Glu) to glutamate 1-semialdehyde (GSA). The protein is Glutamyl-tRNA reductase of Bacillus cereus (strain ZK / E33L).